We begin with the raw amino-acid sequence, 1164 residues long: Protein PLASTID MOVEMENT IMPAIRED 1-RELATED 1 (1164 aa).

The disordered stretch occupies residues 30–54 (KNPRGSVAGSNKTPTKPLSRSNLAE). Positions 37–51 (AGSNKTPTKPLSRSN) are enriched in polar residues. One can recognise a C2 NT-type domain in the interval 69-217 (INHVRNRRFN…TLSMSFGYTV (149 aa)). Residues 224–263 (PASSGSTQNFRSSSNVKQTSNNTGLTRAISAKSSLGNGKS) are compositionally biased toward polar residues. 4 disordered regions span residues 224-268 (PASS…SRRY), 466-486 (APEE…PKDA), 1038-1063 (SELK…PMEE), and 1124-1164 (GSAK…IMPK). Basic and acidic residues-rich tracts occupy residues 469–486 (EGNK…PKDA) and 1052–1062 (SDAKKEEKPME).

It is found in the cytoplasm. Its function is as follows. Together with PMI1, necessary for chloroplast and nuclear photorelocation movements via the regulation of chloroplast-actin (cp-actin) filaments in pavement cells. The protein is Protein PLASTID MOVEMENT IMPAIRED 1-RELATED 1 of Arabidopsis thaliana (Mouse-ear cress).